A 476-amino-acid chain; its full sequence is Undecaprenyl-phosphate galactose phosphotransferase (476 aa).

5 helical membrane passes run 15 to 35, 52 to 72, 93 to 113, 115 to 135, and 283 to 303; these read IFLA…SLGC, LDTR…WFWI, TIVI…WQFS, YVWV…RALT, and FDIV…IYLW. Residues 304–476 are Cytoplasmic-facing; the sequence is YKVTRDGGPA…KVVLRRDGAY (173 aa).

This sequence belongs to the bacterial sugar transferase family.

It localises to the cell inner membrane. The catalysed reaction is di-trans,octa-cis-undecaprenyl phosphate + UDP-alpha-D-galactose = alpha-D-galactosyl-di-trans,octa-cis-undecaprenyl diphosphate + UMP. Its pathway is bacterial outer membrane biogenesis; LPS O-antigen biosynthesis. Functionally, is responsible for transferring galactose-1-phosphate to the lipid precursor undecaprenol phosphate in the first steps of O-polysaccharide biosynthesis. This is Undecaprenyl-phosphate galactose phosphotransferase (rfbP) from Salmonella typhimurium (strain LT2 / SGSC1412 / ATCC 700720).